The following is a 395-amino-acid chain: GDP-mannose 4,6 dehydratase (395 aa).

Composition is skewed to polar residues over residues 1–13 (MLNT…STSD) and 24–36 (ESSS…QNGT). The tract at residues 1–44 (MLNTRLIAMSTSDGAPETKKQRPESSSNGSKDQNGTEAGAEGDS) is disordered. NADP(+) is bound by residues 53–58 (GITGQD), 109–110 (DM), 131–135 (LAAQS), and Y146. Residue T178 is part of the active site. Active-site nucleophile residues include E180 and Y202. NADP(+) contacts are provided by K206, H232, and R237.

It belongs to the NAD(P)-dependent epimerase/dehydratase family. GDP-mannose 4,6-dehydratase subfamily. Requires NADP(+) as cofactor.

It carries out the reaction GDP-alpha-D-mannose = GDP-4-dehydro-alpha-D-rhamnose + H2O. It functions in the pathway nucleotide-sugar biosynthesis; GDP-L-fucose biosynthesis via de novo pathway; GDP-L-fucose from GDP-alpha-D-mannose: step 1/2. Functionally, catalyzes the conversion of GDP-D-mannose to GDP-4-dehydro-6-deoxy-D-mannose (also known as GDP-4-keto-6-deoxy-D-mannose or GDP-4-dehydro-alpha-D-rhamnose), an essential step in the synthesis of GDP-fucose from GDP-mannose. This Drosophila melanogaster (Fruit fly) protein is GDP-mannose 4,6 dehydratase (Gmd).